A 400-amino-acid polypeptide reads, in one-letter code: Acetate kinase (400 aa).

Asn-10 is a binding site for Mg(2+). Position 17 (Lys-17) interacts with ATP. Residue Arg-91 coordinates substrate. Residue Asp-150 is the Proton donor/acceptor of the active site. ATP contacts are provided by residues 210–214, 285–287, and 333–337; these read HLGNG, DCR, and GIGEN. Glu-387 contacts Mg(2+).

It belongs to the acetokinase family. In terms of assembly, homodimer. Mg(2+) is required as a cofactor. The cofactor is Mn(2+).

It is found in the cytoplasm. It carries out the reaction acetate + ATP = acetyl phosphate + ADP. Its pathway is metabolic intermediate biosynthesis; acetyl-CoA biosynthesis; acetyl-CoA from acetate: step 1/2. In terms of biological role, catalyzes the formation of acetyl phosphate from acetate and ATP. Can also catalyze the reverse reaction. The polypeptide is Acetate kinase (Yersinia pestis bv. Antiqua (strain Antiqua)).